The sequence spans 524 residues: RNA-splicing ligase RtcB homolog 1 (524 aa).

Residues aspartate 141, cysteine 144, histidine 249, histidine 281, and histidine 372 each coordinate Mn(2+). 248–252 (NHYLE) contacts GMP. GMP-binding positions include 372-373 (HN), 421-424 (GGSM), serine 428, 447-450 (HGAG), and lysine 523. The GMP-histidine intermediate role is filled by histidine 447.

This sequence belongs to the RtcB family. As to quaternary structure, catalytic component of the tRNA-splicing ligase complex. Mn(2+) serves as cofactor.

It carries out the reaction a 3'-end 3'-phospho-ribonucleotide-RNA + a 5'-end dephospho-ribonucleoside-RNA + GTP = a ribonucleotidyl-ribonucleotide-RNA + GMP + diphosphate. The enzyme catalyses a 3'-end 2',3'-cyclophospho-ribonucleotide-RNA + a 5'-end dephospho-ribonucleoside-RNA + GTP + H2O = a ribonucleotidyl-ribonucleotide-RNA + GMP + diphosphate + H(+). Functionally, catalytic subunit of the tRNA-splicing ligase complex that acts by directly joining spliced tRNA halves to mature-sized tRNAs by incorporating the precursor-derived splice junction phosphate into the mature tRNA as a canonical 3',5'-phosphodiester. May act as an RNA ligase with broad substrate specificity, and may function toward other RNAs. The protein is RNA-splicing ligase RtcB homolog 1 of Entamoeba histolytica (strain ATCC 30459 / HM-1:IMSS / ABRM).